Consider the following 344-residue polypeptide: KRR1 small subunit processome component homolog (344 aa).

A KH domain is found at 126–194 (DIIKIGNLVH…VRDIVLDTMN (69 aa)). Residues 230–246 (KNKNISKRKQPKNKKPK) are compositionally biased toward basic residues. The segment at 230 to 326 (KNKNISKRKQ…KRAAEDNKVD (97 aa)) is disordered. Positions 271 to 344 (FLNKEQKQAK…MKANKKKERS (74 aa)) form a coiled coil. Basic and acidic residues predominate over residues 272 to 303 (LNKEQKQAKRQQERTAKQAEAAKKQDERRNKD).

This sequence belongs to the KRR1 family. Monomer. Component of the ribosomal small subunit (SSU) processome.

The protein localises to the nucleus. The protein resides in the nucleolus. In terms of biological role, required for 40S ribosome biogenesis. Involved in nucleolar processing of pre-18S ribosomal RNA and ribosome assembly. Binds to RNA. Required for female germline development, cell viability during eye development and for survival of dividing cells and epithelial cells during early wing disk development. This is KRR1 small subunit processome component homolog from Drosophila mojavensis (Fruit fly).